The primary structure comprises 244 residues: 3-oxoacyl-[acyl-carrier-protein] reductase FabG (244 aa).

NADP(+)-binding positions include 12–15 and T37; that span reads GASR. Residues G50 and G53 each contribute to the Ca(2+) site. NADP(+) contacts are provided by residues 59 to 60 and N86; that span reads NV. S138 serves as a coordination point for substrate. A Ca(2+)-binding site is contributed by N145. Y151 serves as the catalytic Proton acceptor. Residues 151 to 155 and I184 each bind NADP(+); that span reads YAAAK. Residues E233 and T234 each coordinate Ca(2+).

It belongs to the short-chain dehydrogenases/reductases (SDR) family. In terms of assembly, homotetramer.

The enzyme catalyses a (3R)-hydroxyacyl-[ACP] + NADP(+) = a 3-oxoacyl-[ACP] + NADPH + H(+). It functions in the pathway lipid metabolism; fatty acid biosynthesis. Catalyzes the NADPH-dependent reduction of beta-ketoacyl-ACP substrates to beta-hydroxyacyl-ACP products, the first reductive step in the elongation cycle of fatty acid biosynthesis. The polypeptide is 3-oxoacyl-[acyl-carrier-protein] reductase FabG (fabG) (Salmonella typhi).